Here is a 333-residue protein sequence, read N- to C-terminus: Phosphoribosylformylglycinamidine cyclo-ligase (333 aa).

This sequence belongs to the AIR synthase family.

It localises to the cytoplasm. It carries out the reaction 2-formamido-N(1)-(5-O-phospho-beta-D-ribosyl)acetamidine + ATP = 5-amino-1-(5-phospho-beta-D-ribosyl)imidazole + ADP + phosphate + H(+). The protein operates within purine metabolism; IMP biosynthesis via de novo pathway; 5-amino-1-(5-phospho-D-ribosyl)imidazole from N(2)-formyl-N(1)-(5-phospho-D-ribosyl)glycinamide: step 2/2. The protein is Phosphoribosylformylglycinamidine cyclo-ligase of Methanosarcina barkeri (strain Fusaro / DSM 804).